The primary structure comprises 446 residues: N-succinylarginine dihydrolase (446 aa).

Residues 19–28 (AGLSFGNVAS), Asn110, and 137–138 (HR) each bind substrate. Residue Glu174 is part of the active site. Arg213 serves as a coordination point for substrate. His249 is an active-site residue. Positions 251 and 364 each coordinate substrate. Cys370 serves as the catalytic Nucleophile.

This sequence belongs to the succinylarginine dihydrolase family. As to quaternary structure, homodimer.

It catalyses the reaction N(2)-succinyl-L-arginine + 2 H2O + 2 H(+) = N(2)-succinyl-L-ornithine + 2 NH4(+) + CO2. The protein operates within amino-acid degradation; L-arginine degradation via AST pathway; L-glutamate and succinate from L-arginine: step 2/5. In terms of biological role, catalyzes the hydrolysis of N(2)-succinylarginine into N(2)-succinylornithine, ammonia and CO(2). This Burkholderia pseudomallei (strain 668) protein is N-succinylarginine dihydrolase.